The chain runs to 319 residues: Zinc metalloproteinase/disintegrin (319 aa).

The propeptide occupies 1 to 28; it reads EDEAPKMCGVTQNWESYEPIKKASQSNL. Residues 34–230 enclose the Peptidase M12B domain; sequence RYIELVIVAD…QKPQCILNKP (197 aa). Ca(2+) is bound by residues glutamate 37 and aspartate 121. Intrachain disulfides connect cysteine 145–cysteine 225, cysteine 185–cysteine 209, and cysteine 187–cysteine 192. Position 170 (histidine 170) interacts with Zn(2+). The active site involves glutamate 171. The Zn(2+) site is built by histidine 174 and histidine 180. Ca(2+) is bound by residues cysteine 225 and asparagine 228. Residues 231-246 constitute a propeptide that is removed on maturation; sequence LRTDTVSTPVSGNELL. Residues 238-319 form the Disintegrin domain; it reads TPVSGNELLE…AGCPRNPFHA (82 aa). Disulfide bonds link cysteine 252/cysteine 267, cysteine 254/cysteine 262, cysteine 261/cysteine 284, cysteine 275/cysteine 281, cysteine 280/cysteine 305, and cysteine 293/cysteine 312. Positions 297-299 match the Cell attachment site motif; that stretch reads RGD.

The protein belongs to the venom metalloproteinase (M12B) family. P-II subfamily. P-IIa sub-subfamily. As to quaternary structure, monomer. Zn(2+) is required as a cofactor. As to expression, expressed by the venom gland.

It localises to the secreted. With respect to regulation, excess of calcium ions significantly suppress the autoproteolysis of the enzyme. In terms of biological role, metalloproteinase that impairs hemostasis in the envenomed animal. Shows autoproteolysis dependent on pH and temperature. Does not show hemorrhagic activity. Its function is as follows. Inhibits platelet aggregation induced by ADP (IC(50) is 200 nM), collagen (IC(50) is 500 nM), thrombin and epinephrin (IC(50) is 300 nM). Does not inhibit aggregation induced by ristocetin. Functionally, inhibits platelet aggregation induced by ADP (IC(50) is 100 nM), collagen (IC(50) is 500 nM), thrombin and epinephrin (IC(50) is 300 nM). Does not inhibit aggregation induced by ristocetin. Significantly inhibits angiogenesis both in vivo and in vitro. The protein is Zinc metalloproteinase/disintegrin of Gloydius brevicauda (Korean slamosa snake).